A 215-amino-acid polypeptide reads, in one-letter code: Small ribosomal subunit protein uS7 (215 aa).

The protein belongs to the universal ribosomal protein uS7 family. As to quaternary structure, part of the 30S ribosomal subunit.

Its function is as follows. One of the primary rRNA binding proteins, it binds directly to 16S rRNA where it nucleates assembly of the head domain of the 30S subunit. Is located at the subunit interface close to the decoding center. This Thermococcus celer protein is Small ribosomal subunit protein uS7.